A 614-amino-acid polypeptide reads, in one-letter code: Zinc finger and SCAN domain-containing protein 2 (614 aa).

3 disordered regions span residues 1–25 (MAAE…EDEQ), 42–73 (AVLQ…EGPQ), and 162–200 (NISG…RVVP). The region spanning 69-127 (AEGPQGALVRFRELCRRWLRPEVHTKEQMLTVLPREIQAWLQEHRPESSEEAVALVEDL) is the SCAN box domain. C2H2-type zinc fingers lie at residues 222–244 (YECP…ERTH), 250–272 (YKCD…QTTH), 278–300 (YKCR…QRIH), 306–328 (FQCA…QRTH), 334–356 (YSCP…QGIH), 362–384 (YACK…QRIH), 390–412 (YKCT…RRTH), 418–440 (YQCG…RRTH), 446–468 (YKCG…QGTH), 474–496 (YECL…QRTH), 502–524 (YRCG…QRTH), 530–552 (YKCL…QRAH), 558–580 (YRCP…QRIH), and 586–608 (YRCP…QRTH).

This sequence belongs to the krueppel C2H2-type zinc-finger protein family. As to expression, in the adult, predominantly found in spermatids. Also present in the embryo.

It is found in the nucleus. May be involved in transcriptional regulation during the post-meiotic stages of spermatogenesis. This Mus musculus (Mouse) protein is Zinc finger and SCAN domain-containing protein 2 (Zscan2).